We begin with the raw amino-acid sequence, 182 residues long: DOMON domain-containing protein Y73F4A.1 (182 aa).

The signal sequence occupies residues 1–18 (MFVLAIVFAFVFIPSSSS). The region spanning 26 to 143 (ELVSMNWNVK…CLNWMVVPGG (118 aa)) is the DOMON domain. Residues Asn-47 and Asn-128 are each glycosylated (N-linked (GlcNAc...) asparagine).

It is found in the secreted. This chain is DOMON domain-containing protein Y73F4A.1, found in Caenorhabditis elegans.